Here is a 789-residue protein sequence, read N- to C-terminus: Spermatogenesis-associated protein 20 (789 aa).

The span at 1–19 shows a compositional bias: basic residues; the sequence is MSHHSPPPPKHKGEHKGHG. Residues 1-65 form a disordered region; it reads MSHHSPPPPK…CPPPAPQKTA (65 aa). Ser-5 and Ser-652 each carry phosphoserine.

As to expression, testis-specific and age-dependent (at protein level). Highly expressed. Expressed in round spermatids located in the inner half-layer of the seminiferous epithelium as well as in early elongated spermatids having cytoplasmic protrusions into the tubular lumen.

It localises to the secreted. Functionally, may play a role in fertility regulation. The sequence is that of Spermatogenesis-associated protein 20 (Spata20) from Rattus norvegicus (Rat).